Here is a 251-residue protein sequence, read N- to C-terminus: 5'-nucleotidase SurE (251 aa).

Residues Asp-8, Asp-9, Ser-42, and Asn-94 each contribute to the a divalent metal cation site.

Belongs to the SurE nucleotidase family. The cofactor is a divalent metal cation.

Its subcellular location is the cytoplasm. The enzyme catalyses a ribonucleoside 5'-phosphate + H2O = a ribonucleoside + phosphate. Nucleotidase that shows phosphatase activity on nucleoside 5'-monophosphates. The protein is 5'-nucleotidase SurE of Hydrogenovibrio crunogenus (strain DSM 25203 / XCL-2) (Thiomicrospira crunogena).